We begin with the raw amino-acid sequence, 1409 residues long: DNA-directed RNA polymerase subunit beta' (1409 aa).

Residues Cys70, Cys72, Cys85, and Cys88 each coordinate Zn(2+). Positions 461, 463, and 465 each coordinate Mg(2+). 4 residues coordinate Zn(2+): Cys820, Cys894, Cys901, and Cys904.

Belongs to the RNA polymerase beta' chain family. In terms of assembly, the RNAP catalytic core consists of 2 alpha, 1 beta, 1 beta' and 1 omega subunit. When a sigma factor is associated with the core the holoenzyme is formed, which can initiate transcription. The cofactor is Mg(2+). Zn(2+) serves as cofactor.

It catalyses the reaction RNA(n) + a ribonucleoside 5'-triphosphate = RNA(n+1) + diphosphate. In terms of biological role, DNA-dependent RNA polymerase catalyzes the transcription of DNA into RNA using the four ribonucleoside triphosphates as substrates. This is DNA-directed RNA polymerase subunit beta' from Ralstonia nicotianae (strain ATCC BAA-1114 / GMI1000) (Ralstonia solanacearum).